Here is a 346-residue protein sequence, read N- to C-terminus: MFLSILVALCLWLHLALGVRGAPCEAVRIPMCRHMPWNITRMPNHLHHSTQENAILAIEQYEELVDVNCSSVLRFFLCAMYAPICTLEFLHDPIKPCKSVCQRARDDCEPLMKMYNHSWPESLACDELPVYDRGVCISPEAIVTDLPEDVKWIDITPDMMVQERPLDVDCKRLSPDRCKCKKVKPTLATYLSKNCSYVIHAKIKAVQRSGCNEVTTVVDVKEIFKSSSPIPRTQVPLITNSSCQCPHILPHQDVLIMCYEWRSRMMLLENCLVEKWRDQLSKRSIQWEERLREQRRTIQDKKKTAGRTSRSNPPKPKGKPPAPKPASPKKNIKTRSAQKKTNPKKV.

Residues M1–G18 form the signal peptide. The FZ domain occupies V19–P139. Cystine bridges form between C24–C85, C32–C78, C69–C108, C97–C136, and C101–C125. N-linked (GlcNAc...) asparagine glycans are attached at residues N38 and N68. N116, N194, and N240 each carry an N-linked (GlcNAc...) asparagine glycan. Residues C178–R307 enclose the NTR domain. Basic and acidic residues predominate over residues Q294–K303. The segment at Q294 to V346 is disordered. The span at P313–A326 shows a compositional bias: pro residues. A compositionally biased stretch (basic residues) spans K330–V346.

The protein belongs to the secreted frizzled-related protein (sFRP) family.

Its subcellular location is the secreted. Soluble frizzled-related proteins (sFRPS) function as modulators of Wnt signaling through direct interaction with Wnts. They have a role in regulating cell growth and differentiation in specific cell types. SFRP4 plays a role in bone morphogenesis. May also act as a regulator of adult uterine morphology and function. May also increase apoptosis during ovulation possibly through modulation of FZ1/FZ4/WNT4 signaling. Has phosphaturic effects by specifically inhibiting sodium-dependent phosphate uptake. The chain is Secreted frizzled-related protein 4 (SFRP4) from Macaca mulatta (Rhesus macaque).